A 217-amino-acid polypeptide reads, in one-letter code: THAP domain-containing protein 2 (217 aa).

The THAP-type zinc finger occupies 1–80; the sequence is MPTNCAAAGC…LKMDAVPTIF (80 aa). The HCFC1-binding motif (HBM) motif lies at 122–125; it reads EHSY.

The polypeptide is THAP domain-containing protein 2 (Thap2) (Mus musculus (Mouse)).